The following is a 200-amino-acid chain: Large ribosomal subunit protein uL4 (200 aa).

Residues 38–72 are disordered; the sequence is GRQGTKQQKTRSDVAGGGKRPWRQKGTGRARAGTT.

Belongs to the universal ribosomal protein uL4 family. Part of the 50S ribosomal subunit.

In terms of biological role, one of the primary rRNA binding proteins, this protein initially binds near the 5'-end of the 23S rRNA. It is important during the early stages of 50S assembly. It makes multiple contacts with different domains of the 23S rRNA in the assembled 50S subunit and ribosome. Functionally, forms part of the polypeptide exit tunnel. In Pseudomonas entomophila (strain L48), this protein is Large ribosomal subunit protein uL4.